Reading from the N-terminus, the 525-residue chain is COP9 signalosome complex subunit 1b (525 aa).

In terms of domain architecture, PCI spans 298–460 (HFLNANFDHC…KILFAKEADQ (163 aa)).

This sequence belongs to the CSN1 family. As to quaternary structure, component of the CSN complex, probably composed of CSN1b, alien/CSN2, CSN3, CSN4, CSN5, CSN6, CSN7 and CSN8.

Its subcellular location is the cytoplasm. It is found in the nucleus. Essential component of the COP9 signalosome complex (CSN), a complex involved in various cellular and developmental processes. The CSN complex is an essential regulator of the ubiquitin (Ubl) conjugation pathway by mediating the deneddylation of the cullin subunits of the SCF-type E3 ligase complexes, leading to decrease the Ubl ligase activity of SCF. The CSN complex plays an essential role in oogenesis and embryogenesis and is required for proper photoreceptor R cell differentiation and promote lamina glial cell migration or axon targeting. It also promotes Ubl-dependent degradation of cyclin E (CycE) during early oogenesis. The sequence is that of COP9 signalosome complex subunit 1b (CSN1b) from Drosophila melanogaster (Fruit fly).